A 507-amino-acid polypeptide reads, in one-letter code: Flagellar hook-associated protein 1 (507 aa).

This sequence belongs to the flagella basal body rod proteins family.

It is found in the secreted. The protein localises to the bacterial flagellum. This Bacillus subtilis (strain 168) protein is Flagellar hook-associated protein 1 (flgK).